The following is a 308-amino-acid chain: GDP-L-colitose synthase (308 aa).

NADP(+) contacts are provided by residues 7–13 (GAGGMVG) and 101–104 (LGSS). Tyr-132 functions as the Proton donor/acceptor in the catalytic mechanism. NADP(+) is bound by residues Lys-136, 160–163 (PCNL), and His-176. Residues Lys-184, Trp-199, and Arg-206 each contribute to the substrate site.

Belongs to the NAD(P)-dependent epimerase/dehydratase family. Fucose synthase subfamily. As to quaternary structure, homodimer.

It carries out the reaction GDP-beta-L-colitose + NAD(+) = GDP-4-dehydro-3,6-dideoxy-alpha-D-mannose + NADH + H(+). The enzyme catalyses GDP-beta-L-colitose + NADP(+) = GDP-4-dehydro-3,6-dideoxy-alpha-D-mannose + NADPH + H(+). The protein operates within nucleotide-sugar metabolism; GDP-L-colitose biosynthesis. In terms of biological role, involved in the biosynthesis of the L-colitose (3,6-dideoxyl-L-xylo-hexose) present in the O-antigen region of lipopolysaccharides (LPS) where it serves as antigenic determinant and are vital for bacterial defense and survival. Catalyzes the two-step NADP-dependent conversion of GDP-4-keto-3,6-dideoxy-D-mannose to GDP-L-colitose. ColC is a bifunctional enzyme catalyzing the C-5 epimerization of GDP-4-keto-3,6-dideoxy-D-mannose and the subsequent C-4 keto reduction of the resulting L-epimer to give GDP-L-colitose. It can use both NADP(+) and NAD(+) as electron acceptor, with a slight preference for NADP(+). This is GDP-L-colitose synthase from Yersinia pseudotuberculosis.